A 520-amino-acid polypeptide reads, in one-letter code: MKGALLVAGTTSDAGKSVVVAGLCRMLARRGVRVAPFKAQNMSNNSVVTLDGGEIGRAQALQARACGLEPSVRFNPVLLKPGSDRRSQLVVRGQAVDTVGAADYFRHRTALREVVAAELASLRAEFDVVLCEGAGSPAEINLRATDLANMGLARAADLPVLVVGDIDRGGVLAHLFGTVAVLEPDDQRLIAGFVVNKFRGDVDLLRPGLDRLAELTGRPTLGVLPFAEELWLDAEDSLGTVADAPVGRPRPPVGTEWLTVAAVRLPRISNSTDVEALACEPGVAVRWVSEPSRLADADLVVVPGSKSTVSDLAWLRRTGLGEALRARVTAGRPVLAICGGYQMLGRRIVDEVESGAGEVAGLGVFDLETEFAAPKVLRRVTGMGAGNPVRGYEIHHGRVRRSGDAPWLGLVDAPEAAVDGGEDAVPLTPEGSVTGGAWGTHVHGLLESDGFRRAWLREVAARAGRHGFQVAPDTSVAAVRAGQLDLLADLVEKHLDQDALERILTDGAPTGLPVLTVGQA.

The region spanning W257–F451 is the GATase cobBQ-type domain. The Nucleophile role is filled by C338. H443 is an active-site residue.

This sequence belongs to the CobB/CobQ family. CobQ subfamily.

It functions in the pathway cofactor biosynthesis; adenosylcobalamin biosynthesis. Functionally, catalyzes amidations at positions B, D, E, and G on adenosylcobyrinic A,C-diamide. NH(2) groups are provided by glutamine, and one molecule of ATP is hydrogenolyzed for each amidation. This is Cobyric acid synthase from Nocardia farcinica (strain IFM 10152).